We begin with the raw amino-acid sequence, 107 residues long: Ribonuclease P protein component 4 (107 aa).

The Zn(2+) site is built by C66, C69, C92, and C95.

The protein belongs to the eukaryotic/archaeal RNase P protein component 4 family. As to quaternary structure, consists of a catalytic RNA component and at least 4-5 protein subunits. Zn(2+) serves as cofactor.

It is found in the cytoplasm. The catalysed reaction is Endonucleolytic cleavage of RNA, removing 5'-extranucleotides from tRNA precursor.. In terms of biological role, part of ribonuclease P, a protein complex that generates mature tRNA molecules by cleaving their 5'-ends. The protein is Ribonuclease P protein component 4 of Methanosarcina barkeri (strain Fusaro / DSM 804).